Reading from the N-terminus, the 97-residue chain is Conotoxin Cal6.1e (97 aa).

Residues 1–22 (MKLTTVLIVAVLVLAACQFTVT) form the signal peptide. The tract at residues 23–49 (DNSGDDTENPSLRSAGENQNPDSTKTI) is disordered. A propeptide spanning residues 23–60 (DNSGDDTENPSLRSAGENQNPDSTKTITARATRARTNM) is cleaved from the precursor. Residues 31–45 (NPSLRSAGENQNPDS) show a composition bias toward polar residues. Intrachain disulfides connect C71-C87, C78-C91, and C86-C96.

Belongs to the conotoxin O1 superfamily. Expressed by the venom duct.

The protein localises to the secreted. Functionally, probable neurotoxin with unknown target. Possibly targets ion channels. This Californiconus californicus (California cone) protein is Conotoxin Cal6.1e.